The chain runs to 345 residues: MTDKTSLSYKDAGVDIDAGNALVGRIKGVVKKTRRPEVMGGLGGFGALCALPQKYREPVLVSGTDGVGTKLRLAMDLKRHDTIGIDLVAMCVNDLVVQGAEPLFFLDYYATGKLDVDTASAVISGIAEGCLQSGCSLVGGETAEMPGMYHGEDYDVAGFCVGVVEKSEIIDGSKVSDGDVLIALGSSGPHSNGYSLVRKILEVSGCDPQTTELDGKPLADHLLAPTRIYVKSVLELIEKVDVNAIAHLTGGGFWENIPRVLPDNTQAVIDESSWQWPEVFNWLQTAGNVERHEMYRTFNCGVGMIIALPAPEVDKALALLNANGENAWKIGIIKASDSEQRVVIE.

Belongs to the AIR synthase family. In terms of assembly, homodimer.

Its subcellular location is the cytoplasm. The catalysed reaction is 2-formamido-N(1)-(5-O-phospho-beta-D-ribosyl)acetamidine + ATP = 5-amino-1-(5-phospho-beta-D-ribosyl)imidazole + ADP + phosphate + H(+). The protein operates within purine metabolism; IMP biosynthesis via de novo pathway; 5-amino-1-(5-phospho-D-ribosyl)imidazole from N(2)-formyl-N(1)-(5-phospho-D-ribosyl)glycinamide: step 2/2. The sequence is that of Phosphoribosylformylglycinamidine cyclo-ligase from Escherichia coli O157:H7.